A 240-amino-acid polypeptide reads, in one-letter code: MATLFIADLHLCVEEPAITAGFLRFLAGEARKADALYILGDLFEAWIGDDDPNPLHRKMAAAIKAVSDSGVPCYFIHGNRDFLLGKRFARESGMTLLPEEKVLELYGRRVLIMHGDTLCTDDAGYQAFRAKVHKPWLQTLFLALPLFVRKRIAARMRANSKEANSSKSLAIMDVNQNAVVSAMEKHQVQWLIHGHTHRPAVHELIANQQPAFRVVLGAWHTEGSMVKVTADDVELIHFPF.

Mn(2+) contacts are provided by aspartate 8, histidine 10, aspartate 41, asparagine 79, and histidine 114. 79 to 80 (NR) contacts substrate. Residues aspartate 122, serine 160, asparagine 164, lysine 167, and histidine 195 each contribute to the substrate site. Mn(2+) is bound by residues histidine 195 and histidine 197.

It belongs to the LpxH family. Mn(2+) serves as cofactor.

The protein localises to the cell inner membrane. Its subcellular location is the cytoplasm. The enzyme catalyses UDP-2-N,3-O-bis[(3R)-3-hydroxytetradecanoyl]-alpha-D-glucosamine + H2O = 2-N,3-O-bis[(3R)-3-hydroxytetradecanoyl]-alpha-D-glucosaminyl 1-phosphate + UMP + 2 H(+). It functions in the pathway glycolipid biosynthesis; lipid IV(A) biosynthesis; lipid IV(A) from (3R)-3-hydroxytetradecanoyl-[acyl-carrier-protein] and UDP-N-acetyl-alpha-D-glucosamine: step 4/6. Inhibited by a sulfonyl piperazine compound that shows antibacterial activity against E.coli; LpxH is the cellular target of this compound. Inhibited by 0.01% (or more) Triton X-100 in vitro. Hydrolyzes the pyrophosphate bond of UDP-2,3-diacylglucosamine to yield 2,3-diacylglucosamine 1-phosphate (lipid X) and UMP by catalyzing the attack of water at the alpha-P atom. Involved in the biosynthesis of lipid A, a phosphorylated glycolipid that anchors the lipopolysaccharide to the outer membrane of the cell. Is essential for E.coli growth. Does not cleave the unacylated UDP-GlcNAc, the mono-acylated UDP-3-O-(R)-3-hydroxymyristoyl-GlcNAc, and CDP-diacylglycerol. The protein is UDP-2,3-diacylglucosamine hydrolase of Escherichia coli (strain K12).